The primary structure comprises 156 residues: 6,7-dimethyl-8-ribityllumazine synthase (156 aa).

Residues phenylalanine 22, 57–59, and 81–83 each bind 5-amino-6-(D-ribitylamino)uracil; these read AVE and CVI. Residue 86–87 participates in (2S)-2-hydroxy-3-oxobutyl phosphate binding; that stretch reads GT. Histidine 89 functions as the Proton donor in the catalytic mechanism. 5-amino-6-(D-ribitylamino)uracil is bound at residue phenylalanine 114. A (2S)-2-hydroxy-3-oxobutyl phosphate-binding site is contributed by arginine 128.

It belongs to the DMRL synthase family. Forms an icosahedral capsid composed of 60 subunits, arranged as a dodecamer of pentamers.

It catalyses the reaction (2S)-2-hydroxy-3-oxobutyl phosphate + 5-amino-6-(D-ribitylamino)uracil = 6,7-dimethyl-8-(1-D-ribityl)lumazine + phosphate + 2 H2O + H(+). The protein operates within cofactor biosynthesis; riboflavin biosynthesis; riboflavin from 2-hydroxy-3-oxobutyl phosphate and 5-amino-6-(D-ribitylamino)uracil: step 1/2. Functionally, catalyzes the formation of 6,7-dimethyl-8-ribityllumazine by condensation of 5-amino-6-(D-ribitylamino)uracil with 3,4-dihydroxy-2-butanone 4-phosphate. This is the penultimate step in the biosynthesis of riboflavin. The sequence is that of 6,7-dimethyl-8-ribityllumazine synthase from Tolumonas auensis (strain DSM 9187 / NBRC 110442 / TA 4).